Reading from the N-terminus, the 147-residue chain is Epididymal secretory protein E3-alpha (147 aa).

The first 25 residues, Met1–Ser25, serve as a signal peptide directing secretion.

In terms of tissue distribution, epididymis, with predominant expression in the corpus region. Moderately expressed in the vas deferens; only low levels are detectable in the caput and cauda regions.

It is found in the secreted. Possible function in sperm maturation. The chain is Epididymal secretory protein E3-alpha (EDDM3A) from Homo sapiens (Human).